Reading from the N-terminus, the 180-residue chain is Stathmin-3 (180 aa).

S-palmitoyl cysteine attachment occurs at residues Cys22 and Cys24. The region spanning 38–180 (GDMEVKQLDK…NKEQREEMSG (143 aa)) is the SLD domain. 7 positions are modified to phosphoserine: Ser50, Ser60, Ser65, Ser68, Ser72, Ser73, and Ser81. Residues 59–82 (KSPSDLSPESPMLSSPPKKKDTSL) form a disordered region. Low complexity predominate over residues 60-74 (SPSDLSPESPMLSSP). Residues 75–179 (PKKKDTSLEE…RNKEQREEMS (105 aa)) are a coiled coil.

The protein belongs to the stathmin family. As to quaternary structure, interacts with STAT3. Interacts with CLU (secreted form); this interaction may act as an important modulator during neuronal differentiation. In terms of processing, N-terminal palmitoylation promotes specific anchoring to the cytosolic leaflet of Golgi membranes and subsequent vesicular trafficking along dendrites and axons. Neuronal Stathmins are substrates for palmitoyltransferases ZDHHC3, ZDHHC7 and ZDHHC15. As to expression, neuron specific.

It is found in the golgi apparatus. The protein localises to the cell projection. Its subcellular location is the growth cone. The protein resides in the axon. It localises to the cytoplasm. It is found in the cytosol. Its function is as follows. Exhibits microtubule-destabilizing activity, which is antagonized by STAT3. This chain is Stathmin-3 (STMN3), found in Homo sapiens (Human).